A 1052-amino-acid polypeptide reads, in one-letter code: Lateral signaling target protein 2 homolog (1052 aa).

5 disordered regions span residues 311 to 348 (YSSIEAPSPEPNSSNNHNNNNSNSSDSGSAKTSTTSPH), 379 to 455 (PSML…DSDS), 506 to 539 (DEFGAEQEQEQQQRQREEQLQPSSEQQEEPSTSA), 551 to 678 (LRLP…ASSF), and 814 to 973 (NTID…IPDG). Low complexity-rich tracts occupy residues 312–346 (SSIEAPSPEPNSSNNHNNNNSNSSDSGSAKTSTTS), 379–392 (PSMLSLSAGSTPTA), and 400–419 (PSHSIASTSSAATTSTNPPA). The span at 422 to 455 (SEDDDDDDEEREDDEEECGMLDSDEQDLNDDSDS) shows a compositional bias: acidic residues. Over residues 554–574 (PSSSSENEQTTGSNQQSTIKT) the composition is skewed to polar residues. Phosphoserine occurs at positions 555 and 556. Composition is skewed to basic residues over residues 588–614 (RQRHHSHHHHHRHHHHHHHHRQHHHQQ) and 625–644 (SHHHHHQTHPHRTSRSARKR). Residues 652–661 (STTAEQQQTI) are compositionally biased toward polar residues. The segment covering 824–842 (NNNNNNNNNSGSSSSSNSS) has biased composition (low complexity). S854 carries the post-translational modification Phosphoserine. The span at 872–915 (QQQQQQQAQLQLQMQRQRNNSVGSNSPSSSSSSSSSSEHNSPIS) shows a compositional bias: low complexity. Over residues 926-935 (SNSASMPSIG) the composition is skewed to polar residues. Residues 936–963 (STATTAAATAAATATTTTSATTTTTTTT) show a composition bias toward low complexity. An FYVE-type zinc finger spans residues 972 to 1032 (DGKAPRCMSC…VCRECYVREV (61 aa)). Zn(2+) contacts are provided by C978, C981, C994, C997, C1002, C1005, C1024, and C1027.

The protein belongs to the lst-2 family.

Negative regulator of epidermal growth factor receptor (EGFR) signaling. The sequence is that of Lateral signaling target protein 2 homolog from Drosophila virilis (Fruit fly).